A 132-amino-acid polypeptide reads, in one-letter code: Protein NrdI (132 aa).

This sequence belongs to the NrdI family.

Probably involved in ribonucleotide reductase function. The protein is Protein NrdI of Staphylococcus epidermidis (strain ATCC 35984 / DSM 28319 / BCRC 17069 / CCUG 31568 / BM 3577 / RP62A).